The following is a 124-amino-acid chain: Small ribosomal subunit protein uS12 (124 aa).

Residue aspartate 89 is modified to 3-methylthioaspartic acid. The disordered stretch occupies residues 105–124; it reads QGVKNRKQARSKYGAKMEKK.

This sequence belongs to the universal ribosomal protein uS12 family. As to quaternary structure, part of the 30S ribosomal subunit. Contacts proteins S8 and S17. May interact with IF1 in the 30S initiation complex.

In terms of biological role, with S4 and S5 plays an important role in translational accuracy. Functionally, interacts with and stabilizes bases of the 16S rRNA that are involved in tRNA selection in the A site and with the mRNA backbone. Located at the interface of the 30S and 50S subunits, it traverses the body of the 30S subunit contacting proteins on the other side and probably holding the rRNA structure together. The combined cluster of proteins S8, S12 and S17 appears to hold together the shoulder and platform of the 30S subunit. The protein is Small ribosomal subunit protein uS12 of Renibacterium salmoninarum (strain ATCC 33209 / DSM 20767 / JCM 11484 / NBRC 15589 / NCIMB 2235).